Here is a 130-residue protein sequence, read N- to C-terminus: Protein PELPK2 (130 aa).

Residues 1–32 (MTLKKSFSASLLSPFLIICLIALLSVPVSVGA) form the signal peptide. 13 repeat units span residues 47–51 (PELPK), 52–56 (PEMPK), 58–62 (PEFPK), 63–67 (LELPK), 69–73 (PEIPK), 74–78 (PEMPK), 80–84 (PEIQK), 91–95 (PELPK), 97–101 (PEFPK), 102–106 (FDFPK), 108–112 (PELPK), 113–117 (PEETK), and 121–125 (FTMPK). Residues 47–125 (PELPKPEMPK…TKVPAFTMPK (79 aa)) are 13 X 5 AA tandem repeat of P-[DEGQ]-[AEFLIV]-[QPT]-K. The segment covering 71–84 (IPKPEMPKLPEIQK) has biased composition (basic and acidic residues). The disordered stretch occupies residues 71-130 (IPKPEMPKLPEIQKPELPTFPELPKMPEFPKFDFPKLPELPKPEETKVPAFTMPKFPGSP). Residues 98-117 (EFPKFDFPKLPELPKPEETK) show a composition bias toward basic and acidic residues.

It is found in the secreted. The protein resides in the cell wall. The sequence is that of Protein PELPK2 from Arabidopsis thaliana (Mouse-ear cress).